Consider the following 526-residue polypeptide: MRVLYFKHSFFRSLLKSNGLPQTLLVFLLIPCYLTVDFRAPPLIPDVPFLWAWNAPTESCFTRFNQPLDLGLFSLVGSPRKSATGQPVTIFYSDRLGLYPYIDDSQLIFNGGLPQLVSLKSHLEVAKTDILHYMPIDNVGLAVIDWEEWRPTWARNWKPKDIYRNKSIELVQQQNILLNFTEAVKWAKEEFEEAARHFMEETLRLGKSLRPNHLWGFYLFPDCYNNKFQVADYKGECPDIEKHRNDALFWIWEESTALYPSIYLKSSLKSSPQAALYVRNRVQEAIRVSKVKDPRNPLPIFVYFRIVFTDLTYQYLYEDDLVNTIGETIALGTSGMVMWGTLSLSQTMKSCLDLHDYLKTILNPYIINVTLAAKMCSQTLCQNQGVCSRKDWNSNDYLHLNPQNFQIHFVKHGKYEIRGNPTLENLLYFSQKFRCSCFAHLNCQERADIESVSTVSVCTLEDICINSLVISDKSELPKDWNRPYFVNSNQSDITSSATVSPCVPRKDVSGYLVVLSLYSQHLKYSL.

The first 35 residues, 1–35, serve as a signal peptide directing secretion; sequence MRVLYFKHSFFRSLLKSNGLPQTLLVFLLIPCYLT. 5 cysteine pairs are disulfide-bonded: cysteine 60–cysteine 351, cysteine 223–cysteine 237, cysteine 376–cysteine 387, cysteine 381–cysteine 435, and cysteine 437–cysteine 443. The Proton donor role is filled by glutamate 147. 2 N-linked (GlcNAc...) asparagine glycosylation sites follow: asparagine 165 and asparagine 179.

The protein belongs to the glycosyl hydrolase 56 family. In terms of tissue distribution, expressed in testis, epididymal sperm and epididymides (at protein level). Expressed at highest levels in testis with lesser amounts in epididymal sperm.

It is found in the cell membrane. The protein resides in the cytoplasmic vesicle. The protein localises to the secretory vesicle. Its subcellular location is the acrosome membrane. It localises to the secreted. It catalyses the reaction Random hydrolysis of (1-&gt;4)-linkages between N-acetyl-beta-D-glucosamine and D-glucuronate residues in hyaluronate.. Catalyzes the hydrolysis of hyaluronan into smaller oligosaccharide fragments. Does not appear to be essential for fertilization. This is Hyaluronidase-5 from Mus musculus (Mouse).